The following is a 364-amino-acid chain: Alanine racemase (364 aa).

Residue lysine 34 is the Proton acceptor; specific for D-alanine of the active site. At lysine 34 the chain carries N6-(pyridoxal phosphate)lysine. Position 129 (arginine 129) interacts with substrate. Tyrosine 259 serves as the catalytic Proton acceptor; specific for L-alanine. Methionine 307 serves as a coordination point for substrate.

This sequence belongs to the alanine racemase family. Pyridoxal 5'-phosphate serves as cofactor.

It carries out the reaction L-alanine = D-alanine. It functions in the pathway amino-acid biosynthesis; D-alanine biosynthesis; D-alanine from L-alanine: step 1/1. Catalyzes the interconversion of L-alanine and D-alanine. May also act on other amino acids. The polypeptide is Alanine racemase (alr) (Coxiella burnetii (strain CbuG_Q212) (Coxiella burnetii (strain Q212))).